The sequence spans 456 residues: MSQEIWADVLGYVRKNISEVEYHTWFAPLKNLGVQDGSLVLGVRNSFAQEWLRKQYQGLLEDALRSLGAQHPQVSFQVLPASQDALLLPSDPPPAPISPGRAPAPPPADNRKTLNPKYTFENFVVGPNNNLAHAAALAVAESPGKAYNPLFIYGDVGLGKTHLMHAVGHYIAERFPEKRIEYVSTETFTNELINAIREDKTTQFRNRYRSVDLLLVDDIQFLAGKERTQEEFFHTFNALYENHKQIILSSDRPPKDIQTLEGRLRSRFEWGLITDIQSPEFETRVAILKMNAEHNRIDIPQEVLELIARQVTTNIRELEGALMRVVAFSSLNNVPFSRAVASKALSNVFAPQEVKVEMMDVLRQVASHFNMPPDVIRGSGRVREVVVPRQVAQYLIRDLTDHSLPEIGQFFGRDHSTVMHAISKVTEQLGKDSELTAAVETLRRKMKGLEDEDSRA.

Positions 1 to 79 (MSQEIWADVL…QHPQVSFQVL (79 aa)) are domain I, interacts with DnaA modulators. A domain II region spans residues 79-112 (LPASQDALLLPSDPPPAPISPGRAPAPPPADNRK). Residues 89 to 112 (PSDPPPAPISPGRAPAPPPADNRK) are disordered. Residues 90 to 108 (SDPPPAPISPGRAPAPPPA) are compositionally biased toward pro residues. The domain III, AAA+ region stretch occupies residues 113–329 (TLNPKYTFEN…GALMRVVAFS (217 aa)). ATP contacts are provided by Gly-157, Gly-159, Lys-160, and Thr-161. The domain IV, binds dsDNA stretch occupies residues 330 to 456 (SLNNVPFSRA…KGLEDEDSRA (127 aa)).

Belongs to the DnaA family. Oligomerizes as a right-handed, spiral filament on DNA at oriC.

The protein resides in the cytoplasm. Functionally, plays an essential role in the initiation and regulation of chromosomal replication. ATP-DnaA binds to the origin of replication (oriC) to initiate formation of the DNA replication initiation complex once per cell cycle. Binds the DnaA box (a 9 base pair repeat at the origin) and separates the double-stranded (ds)DNA. Forms a right-handed helical filament on oriC DNA; dsDNA binds to the exterior of the filament while single-stranded (ss)DNA is stabiized in the filament's interior. The ATP-DnaA-oriC complex binds and stabilizes one strand of the AT-rich DNA unwinding element (DUE), permitting loading of DNA polymerase. After initiation quickly degrades to an ADP-DnaA complex that is not apt for DNA replication. Binds acidic phospholipids. This is Chromosomal replication initiator protein DnaA from Deinococcus deserti (strain DSM 17065 / CIP 109153 / LMG 22923 / VCD115).